Consider the following 542-residue polypeptide: Prolyl 3-hydroxylase OGFOD1 (542 aa).

Residues Asp134–Gly239 enclose the Fe2OG dioxygenase domain. Fe cation is bound by residues His155 and Asp157. Tyr169 contacts 2-oxoglutarate. His218 is a binding site for Fe cation. Arg230 contacts 2-oxoglutarate. The disordered stretch occupies residues Glu373–Cys435. Positions Glu400 to Gln416 are enriched in polar residues.

The protein belongs to the TPA1 family. Monomer. Fe(2+) is required as a cofactor. Requires L-ascorbate as cofactor.

It is found in the cytoplasm. It localises to the nucleus. It catalyses the reaction [ribosomal protein uS12]-L-proline + 2-oxoglutarate + O2 = [ribosomal protein uS12]-(3S)-3-hydroxy-L-proline + succinate + CO2. Prolyl 3-hydroxylase that catalyzes 3-hydroxylation of 'Pro-62' of small ribosomal subunit uS12 (RPS23), thereby regulating protein translation termination efficiency. Involved in stress granule formation. The sequence is that of Prolyl 3-hydroxylase OGFOD1 (OGFOD1) from Pongo abelii (Sumatran orangutan).